The following is a 79-amino-acid chain: D-alanyl carrier protein (79 aa).

Residues 2–79 (AEFKEQVLDI…MVIKKLEEIR (78 aa)) enclose the Carrier domain. Position 37 is an O-(pantetheine 4'-phosphoryl)serine (S37).

Belongs to the DltC family. In terms of processing, 4'-phosphopantetheine is transferred from CoA to a specific serine of apo-DCP.

It localises to the cytoplasm. It participates in cell wall biogenesis; lipoteichoic acid biosynthesis. Its function is as follows. Carrier protein involved in the D-alanylation of lipoteichoic acid (LTA). The loading of thioester-linked D-alanine onto DltC is catalyzed by D-alanine--D-alanyl carrier protein ligase DltA. The DltC-carried D-alanyl group is further transferred to cell membrane phosphatidylglycerol (PG) by forming an ester bond, probably catalyzed by DltD. D-alanylation of LTA plays an important role in modulating the properties of the cell wall in Gram-positive bacteria, influencing the net charge of the cell wall. The sequence is that of D-alanyl carrier protein from Bacillus anthracis (strain CDC 684 / NRRL 3495).